We begin with the raw amino-acid sequence, 204 residues long: LexA repressor (204 aa).

Positions 28–48 form a DNA-binding region, H-T-H motif; the sequence is RAEIANRLGFKSANAAEEHLK. Catalysis depends on for autocatalytic cleavage activity residues S121 and K158.

Belongs to the peptidase S24 family. In terms of assembly, homodimer.

The catalysed reaction is Hydrolysis of Ala-|-Gly bond in repressor LexA.. Represses a number of genes involved in the response to DNA damage (SOS response), including recA and lexA. In the presence of single-stranded DNA, RecA interacts with LexA causing an autocatalytic cleavage which disrupts the DNA-binding part of LexA, leading to derepression of the SOS regulon and eventually DNA repair. The chain is LexA repressor from Shewanella frigidimarina (strain NCIMB 400).